The sequence spans 498 residues: ATP synthase subunit beta, chloroplastic (498 aa).

172-179 provides a ligand contact to ATP; that stretch reads GGAGVGKT.

The protein belongs to the ATPase alpha/beta chains family. As to quaternary structure, F-type ATPases have 2 components, CF(1) - the catalytic core - and CF(0) - the membrane proton channel. CF(1) has five subunits: alpha(3), beta(3), gamma(1), delta(1), epsilon(1). CF(0) has four main subunits: a(1), b(1), b'(1) and c(9-12).

The protein resides in the plastid. Its subcellular location is the chloroplast thylakoid membrane. The enzyme catalyses ATP + H2O + 4 H(+)(in) = ADP + phosphate + 5 H(+)(out). Produces ATP from ADP in the presence of a proton gradient across the membrane. The catalytic sites are hosted primarily by the beta subunits. This chain is ATP synthase subunit beta, chloroplastic, found in Spinacia oleracea (Spinach).